We begin with the raw amino-acid sequence, 249 residues long: Methyl-coenzyme M reductase subunit gamma (249 aa).

Positions 43–62 (RAPGEEYPSVHPPLEELDEP) are disordered. R120 is a coenzyme M binding site.

This sequence belongs to the methyl-coenzyme M reductase gamma subunit family. MCR is a hexamer of two alpha, two beta, and two gamma chains, forming a dimer of heterotrimers. Coenzyme F430 is required as a cofactor.

Its subcellular location is the cytoplasm. It carries out the reaction coenzyme B + methyl-coenzyme M = methane + coenzyme M-coenzyme B heterodisulfide. It participates in one-carbon metabolism; methyl-coenzyme M reduction; methane from methyl-coenzyme M: step 1/1. Its function is as follows. Component of the methyl-coenzyme M reductase (MCR) I that catalyzes the reductive cleavage of methyl-coenzyme M (CoM-S-CH3 or 2-(methylthio)ethanesulfonate) using coenzyme B (CoB or 7-mercaptoheptanoylthreonine phosphate) as reductant which results in the production of methane and the mixed heterodisulfide of CoB and CoM (CoM-S-S-CoB). This is the final step in methanogenesis. The sequence is that of Methyl-coenzyme M reductase subunit gamma (mcrG) from Methanothermus fervidus.